The primary structure comprises 502 residues: UPF0371 protein CLB_0371 (502 aa).

It belongs to the UPF0371 family.

The polypeptide is UPF0371 protein CLB_0371 (Clostridium botulinum (strain ATCC 19397 / Type A)).